Consider the following 1282-residue polypeptide: Crescerin-like protein che-12 (1282 aa).

TOG regions lie at residues 33–240 (DFDT…EHTE) and 268–515 (PSLV…MDSF). HEAT repeat units follow at residues 59–96 (QKKG…TFGS), 100–137 (YCMC…LKPE), 162–209 (ELHH…FIGN), 261–300 (RLRF…QITP), 308–345 (PHLH…HLKG), 349–386 (AHIQ…NINP), 388–421 (TVGG…TISP), and 424–461 (FNLQ…LLNG). Positions 566–714 (IQQQGQAEKP…RSFDDRPAKA (149 aa)) are disordered. Composition is skewed to low complexity over residues 575–592 (PSFS…HQAQ) and 633–644 (SAASNPNSSTSS). Residues 702–712 (DPPRSFDDRPA) show a composition bias toward basic and acidic residues. TOG regions lie at residues 800-1022 (NMSV…ANVE) and 1066-1282 (TELL…ALIR). HEAT repeat units follow at residues 838–875 (DNLK…NLNS), 879–917 (SEME…AATA), 919–953 (KALQ…IQGS), 961–998 (NALS…DPNF), 1095–1132 (ASDT…SMAK), 1177–1214 (IEPV…LAYK), and 1219–1258 (QVEV…LIGE).

The protein belongs to the Crescerin family. As to expression, detected in a subset of amphid neurons that lack wing- or finger-like ciliary extensions. Likewise, detected in phasmid neurons.

The protein resides in the cell projection. The protein localises to the cilium. It is found in the perikaryon. It localises to the dendrite. Functionally, required for normal structure and function of sensory cilia on amphid neurons, especially for the formation of distal ciliary structures, but is less important for normal assembly of middle and basal ciliary structures. Plays a role in the organization of axoneme microtubule bundles in sensory cilia. Required for normal structure and function of the ASER neuron that mediates attraction to NaCl. Required for normal chemotaxis to NaCl. Required for normal avoidance response to high osmolarity. In contrast, is not required for normal chemotaxis to isoamyl alcohol. Does not play a role in intraflagella transport (IFT). Promotes dauer formation in response to pheromones such as the ascarosides ascr#2, ascr#3, ascr#5, ascr#8 and icas#9. The chain is Crescerin-like protein che-12 from Caenorhabditis elegans.